Consider the following 340-residue polypeptide: Guanine nucleotide-binding protein subunit beta-4 (340 aa).

Residue Ser-2 is modified to N-acetylserine. A Phosphoserine modification is found at Ser-2. WD repeat units follow at residues 53-92 (GHLA…KMHA), 95-134 (LRSS…GNVR), 141-179 (GHTG…QTTT), 182-221 (GHSG…CRQS), and 224-263 (GHIS…ELLL). The residue at position 266 (His-266) is a Phosphohistidine. WD repeat units follow at residues 268–307 (NIIC…RAGV) and 310–339 (GHDN…LRIW).

Belongs to the WD repeat G protein beta family. G proteins are composed of 3 units, alpha, beta and gamma. In terms of tissue distribution, widely expressed in the brain. Highest levels found in the hippocampus and layers v and vi of the neocortex.

Its function is as follows. Guanine nucleotide-binding proteins (G proteins) are involved as a modulator or transducer in various transmembrane signaling systems. The beta and gamma chains are required for the GTPase activity, for replacement of GDP by GTP, and for G protein-effector interaction. In Rattus norvegicus (Rat), this protein is Guanine nucleotide-binding protein subunit beta-4 (Gnb4).